We begin with the raw amino-acid sequence, 394 residues long: MDSQGRKVVVCDNGTGFVKCGYAGSNFPEHIFPALVGRPIIRSTAKVGNIEIKDLMVGDEASELRSMLEVNYPMENGIVRNWDDMKHLWDYTFGPEKLNINSRDCKILLTEPPMNPTKNREKIIEVMFETYQFTGVYIAIQAVLTLYAQGLLTGVVVDSGDGVTHICPVYEGFSLPHLTRRLDIAGRDITRYLIKLLLLRGYAFNHSADFETVRMMKENLCYVGYNIEQEQKLALETTVLVESYTLPDGRVIKVGGERFEAPEALFQPHLINVEGVGVAELLFNTIQAADIDTRAEFYKHIVLSGGSTMYPGLPSRLERELKQLYLERVLKGDVDKLSKFKIRIEDPPRRKHMVFLGGAVLADIMKDKDNFWLTREEYQEKGVRVLEKLGVTVR.

ATP is bound by residues 160 to 162, 214 to 218, and 305 to 310; these read GDG, RMMKE, and GGSTMY.

It belongs to the actin family. ARP2 subfamily. Component of the Arp2/3 complex composed of actr2/arp2, actr3/arp3, arpc1b, arpc2, arpc3, arpc4 and arpc5.

The protein resides in the cytoplasm. It is found in the cytoskeleton. Its subcellular location is the cell projection. It localises to the nucleus. Its function is as follows. ATP-binding component of the Arp2/3 complex, a multiprotein complex that mediates actin polymerization upon stimulation by nucleation-promoting factor (NPF). The Arp2/3 complex mediates the formation of branched actin networks in the cytoplasm, providing the force for cell motility. Seems to contact the pointed end of the daughter actin filament. In addition to its role in the cytoplasmic cytoskeleton, the Arp2/3 complex also promotes actin polymerization in the nucleus, thereby regulating gene transcription and repair of damaged DNA. The Arp2/3 complex promotes homologous recombination (HR) repair in response to DNA damage by promoting nuclear actin polymerization, leading to drive motility of double-strand breaks (DSBs). The protein is Actin-related protein 2-B (actr2b) of Danio rerio (Zebrafish).